Reading from the N-terminus, the 417-residue chain is Gamma-glutamyl phosphate reductase (417 aa).

The protein belongs to the gamma-glutamyl phosphate reductase family.

It is found in the cytoplasm. The enzyme catalyses L-glutamate 5-semialdehyde + phosphate + NADP(+) = L-glutamyl 5-phosphate + NADPH + H(+). Its pathway is amino-acid biosynthesis; L-proline biosynthesis; L-glutamate 5-semialdehyde from L-glutamate: step 2/2. Its function is as follows. Catalyzes the NADPH-dependent reduction of L-glutamate 5-phosphate into L-glutamate 5-semialdehyde and phosphate. The product spontaneously undergoes cyclization to form 1-pyrroline-5-carboxylate. This Escherichia coli O45:K1 (strain S88 / ExPEC) protein is Gamma-glutamyl phosphate reductase.